The sequence spans 897 residues: Alanine--tRNA ligase (897 aa).

Residues H591, H595, C695, and H699 each contribute to the Zn(2+) site.

Belongs to the class-II aminoacyl-tRNA synthetase family. The cofactor is Zn(2+).

Its subcellular location is the cytoplasm. It catalyses the reaction tRNA(Ala) + L-alanine + ATP = L-alanyl-tRNA(Ala) + AMP + diphosphate. In terms of biological role, catalyzes the attachment of alanine to tRNA(Ala) in a two-step reaction: alanine is first activated by ATP to form Ala-AMP and then transferred to the acceptor end of tRNA(Ala). Also edits incorrectly charged Ser-tRNA(Ala) and Gly-tRNA(Ala) via its editing domain. The chain is Alanine--tRNA ligase from Methanobrevibacter smithii (strain ATCC 35061 / DSM 861 / OCM 144 / PS).